The sequence spans 406 residues: Inner kinetochore subunit OKP1 (406 aa).

Disordered regions lie at residues 1–37 (MAAD…SDSS) and 59–122 (TQSK…TSGE). Residues 8–21 (FLQNIENDSINNGQ) show a composition bias toward polar residues. The span at 26–37 (SPNRSSSESDSS) shows a compositional bias: low complexity. Residues 69–78 (NSDDAEEGEI) are compositionally biased toward acidic residues. Residue Ser-70 is modified to Phosphoserine. 2 stretches are compositionally biased toward basic and acidic residues: residues 79–89 (EERTNKEEGQY) and 97–106 (LRFEVGKEST). The segment covering 107-122 (GKLQSHLSDGSATSGE) has biased composition (polar residues). A coiled-coil region spans residues 239–285 (SKRQFIQNRYSQELQNNERLEAILSREQNLLEETRKLCMNLKTNNKK). Residues 317–340 (MHPDGPVTFRNDSHELNLMLNDPI) are CTF19-MCM21 binding motif. Residues 353 to 400 (VLSLLPSLKEYTKKSKELKETMGQMISDSHEEEIKEVFVPHHESHQDK) form an interaction with NKP1-NKP2 region. The disordered stretch occupies residues 379-406 (SDSHEEEIKEVFVPHHESHQDKTEEDIH). Residues 380–406 (DSHEEEIKEVFVPHHESHQDKTEEDIH) show a composition bias toward basic and acidic residues.

Belongs to the CENP-Q/OKP1 family. As to quaternary structure, component of the heterotetrameric kinetochore subcomplex COMA, which consists of AME1, CTF19, MCM21 and OKP1. The COMA subcomplex is part of a larger constitutive centromere-associated network (CCAN) (also known as central kinetochore CTF19 complex in yeast), which is composed of at least AME1, CHL4, CNN1, CTF3, CTF19, IML3, MCM16, MCM21, MCM22, MHF1, MHF2, MIF2, NKP1, NKP2, OKP1 and WIP1. COMA binds the centromeric nucleosome-binding protein MIF2, and to the outer kinetochore MIND subcomplex. OKP1 interacts directly with AME1, with an NKP1-NKP2 dimer, and with CTF19-MCM21.

It localises to the nucleus. It is found in the chromosome. Its subcellular location is the centromere. The protein resides in the kinetochore. Functionally, component of the kinetochore, a multiprotein complex that assembles on centromeric DNA and attaches chromosomes to spindle microtubules, mediating chromosome segregation and sister chromatid segregation during meiosis and mitosis. Component of the inner kinetochore COMA complex, which connects centromere-associated proteins and the outer kinetochore. COMA interacts with other inner kinetochore proteins to form the inner kinetochore constitutive centromere-associated network (CCAN), which serves as a structural platform for outer kinetochore assembly. This Saccharomyces cerevisiae (strain ATCC 204508 / S288c) (Baker's yeast) protein is Inner kinetochore subunit OKP1.